The sequence spans 541 residues: Tripeptidyl aminopeptidase (541 aa).

A signal peptide spans 1 to 36; it reads MRKSSIRRRATAFGTAGALVTATLIAGAVSAPAASA. The propeptide occupies 37–39; it reads APA. The AB hydrolase-1 domain maps to 123-501; the sequence is GALIYNPGGP…SRLITERDAG (379 aa). The active-site Nucleophile is the Ser249. The active site involves Asp474. His503 acts as the Proton donor in catalysis.

The protein belongs to the peptidase S33 family.

The protein resides in the secreted. Cleaves tripeptides from the N-termini of proteins. Does not cleave mono- or dipeptides, or N-terminally blocked peptides. The sequence is that of Tripeptidyl aminopeptidase from Streptomyces coelicolor (strain ATCC BAA-471 / A3(2) / M145).